The chain runs to 844 residues: Lysine-specific histone demethylase 1 homolog 1 (844 aa).

The segment covering 1 to 18 (MSTETKETRPETKPEDLG) has biased composition (basic and acidic residues). The segment at 1–131 (MSTETKETRP…PGPRARKRRR (131 aa)) is disordered. Acidic residues predominate over residues 26–40 (PGEEPLGELIADDVN). Polar residues-rich tracts occupy residues 46 to 62 (ASAT…QSEQ) and 107 to 118 (DLVTEQQSQNPN). The region spanning 154–255 (GKEVDSEALI…FGLAPVIKEA (102 aa)) is the SWIRM domain. FAD-binding residues include Glu-295, Arg-297, and Arg-303. Positions 516-523 (LKKGSIEF) match the Nuclear localization signal motif. Glu-679 contacts FAD.

The protein belongs to the flavin monoamine oxidase family. As to quaternary structure, interacts with CZS. Interacts with OTU6/OTLD1. It depends on FAD as a cofactor. As to expression, expressed in the shoot and root apical regions of young seedlings. Expressed in cotyledons and inflorescences.

It localises to the nucleus. It is found in the cytoplasm. Probable histone demethylase that reduces the levels of histone H3 'Lys-4' methylation in chromatin of the floral repressor FLOWERING LOCUS C (FLC) and the sporophytically silenced floral repressor FWA. Seems to act in partial redundancy with FLOWERING LOCUS D (FLD) to repress FLC expression. Required for cytosine methylation of FWA. Controls primary seed dormancy by regulating DOG1 and abscisic acid signaling-related genes. In association with OTU6/OTLD1, involved in transcriptional gene repression via histone deubiquitination and demethylation. In Arabidopsis thaliana (Mouse-ear cress), this protein is Lysine-specific histone demethylase 1 homolog 1.